The following is a 305-amino-acid chain: Homoserine O-acetyltransferase (305 aa).

Cysteine 142 (acyl-thioester intermediate) is an active-site residue. Substrate-binding residues include lysine 163 and serine 192. Histidine 235 acts as the Proton acceptor in catalysis. Glutamate 237 is a catalytic residue. Arginine 249 is a binding site for substrate.

This sequence belongs to the MetA family.

The protein localises to the cytoplasm. The enzyme catalyses L-homoserine + acetyl-CoA = O-acetyl-L-homoserine + CoA. It functions in the pathway amino-acid biosynthesis; L-methionine biosynthesis via de novo pathway; O-acetyl-L-homoserine from L-homoserine: step 1/1. Transfers an acetyl group from acetyl-CoA to L-homoserine, forming acetyl-L-homoserine. This is Homoserine O-acetyltransferase from Cereibacter sphaeroides (strain KD131 / KCTC 12085) (Rhodobacter sphaeroides).